A 350-amino-acid polypeptide reads, in one-letter code: Arginine/serine-rich coiled-coil protein 2 (350 aa).

Disordered regions lie at residues Met-1–Arg-146 and Ser-328–Val-350. The segment covering Gln-10 to His-24 has biased composition (basic residues). Basic and acidic residues predominate over residues Arg-25–Lys-51. Basic residues predominate over residues His-52–Ser-132. Residues Arg-146–Ala-187 are a coiled coil.

Belongs to the RSRC2 family.

This chain is Arginine/serine-rich coiled-coil protein 2 (rsrc2), found in Xenopus laevis (African clawed frog).